The primary structure comprises 91 residues: Large ribosomal subunit protein uL23c (91 aa).

It belongs to the universal ribosomal protein uL23 family. Part of the 50S ribosomal subunit.

The protein resides in the plastid. It localises to the chloroplast. Binds to 23S rRNA. This chain is Large ribosomal subunit protein uL23c (rpl23), found in Anthoceros angustus (Hornwort).